The sequence spans 196 residues: Putative AAA family ATPase L572 (196 aa).

32–39 (NAVNCKET) serves as a coordination point for ATP.

It belongs to the AAA ATPase family.

The sequence is that of Putative AAA family ATPase L572 from Acanthamoeba polyphaga mimivirus (APMV).